A 243-amino-acid polypeptide reads, in one-letter code: Voltage-gated monoatomic cation channel TMEM109 (243 aa).

A signal peptide spans 1–33 (MAGAHSTPLWSRHLLKAVLMVLVALFLVHSASA). At 34-83 (QSHREFASPGQQKKETSADILTQIGRSLKEMLDTWLGPETMHVISETLLQ) the chain is on the lumenal side. A helical membrane pass occupies residues 84–104 (VMWAISSAISVACFALSGIAA). The Cytoplasmic segment spans residues 105-135 (QLLSALGLDGEQLTQGLKLSPSQVQTLLLWG). A helical membrane pass occupies residues 136–156 (AAALVIYWLLSLLLGLVLALL). The Lumenal segment spans residues 157 to 185 (GRILGGLKLVLFVAGFVALVRSVPDPSTR). A helical membrane pass occupies residues 186–205 (ALMLLALLTLFALLSRLTGS). The Cytoplasmic segment spans residues 206-243 (RSSGSHLEAKVRGLERQIEELRGRQRRAAKMPRSMEEE).

In terms of assembly, homooligomer. Interacts with CRYAB; in the cellular response to DNA damage.

It localises to the nucleus outer membrane. It is found in the endoplasmic reticulum membrane. The protein localises to the sarcoplasmic reticulum membrane. It catalyses the reaction K(+)(in) = K(+)(out). The catalysed reaction is Ca(2+)(in) = Ca(2+)(out). Functions as a voltage-gated monoatomic cation channel permeable to both potassium and calcium. Plays a role in the cellular response to DNA damage. The polypeptide is Voltage-gated monoatomic cation channel TMEM109 (Mus musculus (Mouse)).